The chain runs to 215 residues: 3-isopropylmalate dehydratase small subunit (215 aa).

This sequence belongs to the LeuD family. LeuD type 1 subfamily. Heterodimer of LeuC and LeuD.

The enzyme catalyses (2R,3S)-3-isopropylmalate = (2S)-2-isopropylmalate. It participates in amino-acid biosynthesis; L-leucine biosynthesis; L-leucine from 3-methyl-2-oxobutanoate: step 2/4. Catalyzes the isomerization between 2-isopropylmalate and 3-isopropylmalate, via the formation of 2-isopropylmaleate. The sequence is that of 3-isopropylmalate dehydratase small subunit from Chromohalobacter salexigens (strain ATCC BAA-138 / DSM 3043 / CIP 106854 / NCIMB 13768 / 1H11).